Consider the following 129-residue polypeptide: Allergen Bra j 1-E (129 aa).

The segment at 28-47 (KQAMQSGSGPQPQGPQQRPP) is disordered. A compositionally biased stretch (low complexity) spans 32 to 47 (QSGSGPQPQGPQQRPP).

It belongs to the 2S seed storage albumins family. In terms of assembly, the mature protein consists of a small and a large chain linked by two disulfide bonds.

Its function is as follows. This is a 2S seed storage protein. This chain is Allergen Bra j 1-E, found in Brassica juncea (Indian mustard).